Consider the following 340-residue polypeptide: UDP-glucose 4-epimerase (340 aa).

NAD(+)-binding positions include 16–17, 37–42, 60–61, 82–86, S127, Y154, K158, and F182; these read YI, IDNNKN, DL, and FAAKT. Substrate-binding residues include S127 and Y154. The Proton acceptor role is filled by Y154. Residues N183, 199–200, 216–218, R231, and 295–298 contribute to the substrate site; these read TL, FLY, and RSWD.

The protein belongs to the NAD(P)-dependent epimerase/dehydratase family. In terms of assembly, homodimer. NAD(+) serves as cofactor.

It carries out the reaction UDP-alpha-D-glucose = UDP-alpha-D-galactose. It participates in carbohydrate metabolism; galactose metabolism. Functionally, involved in the metabolism of galactose. Catalyzes the conversion of UDP-galactose (UDP-Gal) to UDP-glucose (UDP-Glc) through a mechanism involving the transient reduction of NAD. The polypeptide is UDP-glucose 4-epimerase (galE) (Mycoplasma genitalium (strain ATCC 33530 / DSM 19775 / NCTC 10195 / G37) (Mycoplasmoides genitalium)).